Reading from the N-terminus, the 307-residue chain is Glutathione synthetase (307 aa).

Residues 120–304 (KLGALRYSHL…VSDKVIEKLL (185 aa)) form the ATP-grasp domain. An ATP-binding site is contributed by 146–202 (AQINHDVVVKPLGGKGGQGVIRLTKDSPGIKAMIELITSQEQLPVMMQKFIPEVKEG). 2 residues coordinate Mg(2+): Glu275 and Asn277.

Belongs to the prokaryotic GSH synthase family. Mg(2+) is required as a cofactor. The cofactor is Mn(2+).

The enzyme catalyses gamma-L-glutamyl-L-cysteine + glycine + ATP = glutathione + ADP + phosphate + H(+). It participates in sulfur metabolism; glutathione biosynthesis; glutathione from L-cysteine and L-glutamate: step 2/2. The sequence is that of Glutathione synthetase from Prochlorococcus marinus subsp. pastoris (strain CCMP1986 / NIES-2087 / MED4).